A 347-amino-acid chain; its full sequence is MNPMTFSLIMMTMVSGTFLVMMSSHWFLIWVGFEMNMLAIIPLLTKQHNPRSTEAATKYFLTQATASMLLMMAAIINLLYSGHWSVQKLINPMASVTMTMALAMKLGLAPFHFWVPEVTQGIPLSSGLILLTWQKLAPLSIMYMISPLTNLNILMIMALLSIAIGGWGGLNQTQLRKIMAYSSIAHMGWMMSVLMYNPNMMLLNLYLYIPMTITTFSLLMINSTTTTTSLSYTWNKLPLITMIILITMLSLGGLPPLTGFLPKWLIIQELVKNNNIILSTVMALLALLNLYFYTRITYTTSLTLFPTMNNTKITWQFKYPKQMLYLPLMIIISTLILPVSPMTAILE.

The next 9 membrane-spanning stretches (helical) occupy residues 3–23 (PMTFSLIMMTMVSGTFLVMMS), 59–79 (YFLTQATASMLLMMAAIINLL), 89–109 (LINPMASVTMTMALAMKLGLA), 150–170 (NLNILMIMALLSIAIGGWGGL), 178–198 (IMAYSSIAHMGWMMSVLMYNP), 201–221 (MLLNLYLYIPMTITTFSLLMI), 237–257 (LPLITMIILITMLSLGGLPPL), 276–296 (IILSTVMALLALLNLYFYTRI), and 326–346 (LPLMIIISTLILPVSPMTAIL).

Belongs to the complex I subunit 2 family. As to quaternary structure, core subunit of respiratory chain NADH dehydrogenase (Complex I) which is composed of 45 different subunits. Interacts with TMEM242.

It is found in the mitochondrion inner membrane. It catalyses the reaction a ubiquinone + NADH + 5 H(+)(in) = a ubiquinol + NAD(+) + 4 H(+)(out). Functionally, core subunit of the mitochondrial membrane respiratory chain NADH dehydrogenase (Complex I) which catalyzes electron transfer from NADH through the respiratory chain, using ubiquinone as an electron acceptor. Essential for the catalytic activity and assembly of complex I. This chain is NADH-ubiquinone oxidoreductase chain 2, found in Nyctophilus arnhemensis (Northern long-eared bat).